Here is a 242-residue protein sequence, read N- to C-terminus: C-reactive protein 1.4 (242 aa).

A signal peptide spans 1–24; the sequence is MKTFHGPTFGTAVFLYLLLFLTSA. The 212-residue stretch at 30–241 folds into the Pentraxin (PTX) domain; that stretch reads ITSKVKFPPS…GVVLSPNEIC (212 aa). Thr-60 and Tyr-63 together coordinate phosphocholine. 2 cysteine pairs are disulfide-bonded: Cys-62-Cys-125 and Cys-112-Cys-144. Residues Asp-85 and Asn-86 each contribute to the Ca(2+) site. Asn-147 carries N-linked (GlcNAc...) asparagine glycosylation. Residues Glu-168, Gln-169, Asp-170, and Gln-180 each coordinate Ca(2+). Cys-207 and Cys-241 are disulfide-bonded.

It belongs to the pentraxin family. Homopentamer. Pentraxin (or pentaxin) have a discoid arrangement of 5 non-covalently bound subunits. Ca(2+) is required as a cofactor.

It localises to the secreted. Might serve the role of immunoglobulins. The sequence is that of C-reactive protein 1.4 from Limulus polyphemus (Atlantic horseshoe crab).